We begin with the raw amino-acid sequence, 887 residues long: 3-hydroxy-3-methylglutaryl-coenzyme A reductase (887 aa).

The Cytoplasmic portion of the chain corresponds to 1–9 (MLSRLFRMH). The helical transmembrane segment at 10-39 (GLFVASHPWEVIVGTVTLTICMMSMNMFTG) threads the bilayer. At 40–56 (NNKICGWNYECPKFEED) the chain is on the lumenal side. The chain crosses the membrane as a helical span at residues 57–78 (VLSSDIIILTITRCIAILYIYF). The region spanning 61 to 218 (DIIILTITRC…MTFFPACVSL (158 aa)) is the SSD domain. Residues 75-78 (YIYF) carry the INSIG-binding motif motif. Over 79–89 (QFQNLRQLGSK) the chain is Cytoplasmic. Residue Lys89 forms a Glycyl lysine isopeptide (Lys-Gly) (interchain with G-Cter in ubiquitin) linkage. The chain crosses the membrane as a helical span at residues 90-114 (YILGIAGLFTIFSSFVFSTVVIHFL). Residues 115–123 (DKELTGLNE) lie on the Lumenal side of the membrane. The chain crosses the membrane as a helical span at residues 124 to 149 (ALPFFLLLIDLSRASALAKFALSSNS). Topologically, residues 150–159 (QDEVRENIAR) are cytoplasmic. A helical membrane pass occupies residues 160-187 (GMAILGPTFTLDALVECLVIGVGTMSGV). Topologically, residues 188–191 (RQLE) are lumenal. Residues 192–220 (IMCCFGCMSVLANYFVFMTFFPACVSLVL) form a helical membrane-spanning segment. The Cytoplasmic segment spans residues 221-248 (ELSRESREGRPIWQLSHFARVLEEEENK). Lys248 is covalently cross-linked (Glycyl lysine isopeptide (Lys-Gly) (interchain with G-Cter in ubiquitin)). A helical membrane pass occupies residues 249–275 (PNPVTQRVKMIMSLGLVLVHAHSRWIA). Residues 276–314 (DPSPQNSTTEHSKVSLGLDEDVSKRIEPSVSLWQFYLSK) are Lumenal-facing. The N-linked (GlcNAc...) asparagine glycan is linked to Asn281. A helical transmembrane segment spans residues 315–339 (MISMDIEQVVTLSLAFLLAVKYIFF). The Cytoplasmic segment spans residues 340-887 (EQAETESTLS…LQGTCTKKAA (548 aa)). Residues Glu558, Lys690, and Asp766 each act as charge relay system in the active site. His865 functions as the Proton donor in the catalytic mechanism. A Phosphoserine; by AMPK modification is found at Ser871.

Belongs to the HMG-CoA reductase family. Homotetramer. Homodimer. Interacts (via its SSD) with INSIG1; the interaction, accelerated by sterols, leads to the recruitment of HMGCR to AMFR/gp78 for its ubiquitination by the sterol-mediated ERAD pathway. Interacts with UBIAD1. In terms of processing, undergoes sterol-mediated ubiquitination and ER-associated degradation (ERAD). Accumulation of sterols in the endoplasmic reticulum (ER) membrane, triggers binding of the reductase to the ER membrane protein INSIG1 or INSIG2. The INSIG1 binding leads to the recruitment of the ubiquitin ligase, AMFR/gp78, RNF139 or RNF145, initiating ubiquitination of the reductase. The ubiquitinated reductase is then extracted from the ER membrane and delivered to cytosolic 26S proteosomes by a mechanism probably mediated by the ATPase Valosin-containing protein VCP/p97. The INSIG2-binding leads to the recruitment of the ubiquitin ligase RNF139, initiating ubiquitination of the reductase. Lys-248 is the main site of ubiquitination. Ubiquitination is enhanced by the presence of a geranylgeranylated protein. N-glycosylated. Deglycosylated by NGLY1 on release from the endoplasmic reticulum (ER) in a sterol-mediated manner. Post-translationally, phosphorylated. Phosphorylation at Ser-871 reduces the catalytic activity.

The protein resides in the endoplasmic reticulum membrane. Its subcellular location is the peroxisome membrane. It carries out the reaction (R)-mevalonate + 2 NADP(+) + CoA = (3S)-3-hydroxy-3-methylglutaryl-CoA + 2 NADPH + 2 H(+). It participates in metabolic intermediate biosynthesis; (R)-mevalonate biosynthesis; (R)-mevalonate from acetyl-CoA: step 3/3. With respect to regulation, regulated by a negative feedback mechanism through sterols and non-sterol metabolites derived from mevalonate. Phosphorylation at Ser-871 down-regulates the catalytic activity. Its function is as follows. Catalyzes the conversion of (3S)-hydroxy-3-methylglutaryl-CoA (HMG-CoA) to mevalonic acid, the rate-limiting step in the synthesis of cholesterol and other isoprenoids, thus plays a critical role in cellular cholesterol homeostasis. This chain is 3-hydroxy-3-methylglutaryl-coenzyme A reductase (HMGCR), found in Mesocricetus auratus (Golden hamster).